The following is a 54-amino-acid chain: Large ribosomal subunit protein bL32 (54 aa).

A disordered region spans residues 1–54 (MAVQQNRKTRSRRGMRRSHDALTAAQLSVDSTSGETHRRHHVTADGYYRGKKVI). The span at 7 to 16 (RKTRSRRGMR) shows a compositional bias: basic residues. A compositionally biased stretch (polar residues) spans 25–34 (AQLSVDSTSG).

The protein belongs to the bacterial ribosomal protein bL32 family.

This is Large ribosomal subunit protein bL32 from Tolumonas auensis (strain DSM 9187 / NBRC 110442 / TA 4).